The chain runs to 96 residues: Large ribosomal subunit protein bL28 (96 aa).

The protein belongs to the bacterial ribosomal protein bL28 family.

In Parvibaculum lavamentivorans (strain DS-1 / DSM 13023 / NCIMB 13966), this protein is Large ribosomal subunit protein bL28.